We begin with the raw amino-acid sequence, 224 residues long: Small ribosomal subunit protein uS3 (224 aa).

Residues 38-106 (IRKFISKKLK…QVHINIVEIK (69 aa)) enclose the KH type-2 domain.

Belongs to the universal ribosomal protein uS3 family. Part of the 30S ribosomal subunit. Forms a tight complex with proteins S10 and S14.

In terms of biological role, binds the lower part of the 30S subunit head. Binds mRNA in the 70S ribosome, positioning it for translation. The chain is Small ribosomal subunit protein uS3 from Lactobacillus helveticus (strain DPC 4571).